The primary structure comprises 553 residues: RNA N(6)-adenosine-methyltransferase METTL16 (553 aa).

The tract at residues 17-20 (PPDF) is RNA-binding. 6 residues coordinate S-adenosyl-L-methionine: R82, G110, S114, E133, T164, and N184. The segment at 163–167 (KTLLM) is K-loop. RNA-binding stretches follow at residues 199–211 (SRNSRRPPPSSVN), 250–254 (GKKCS), and 277–283 (QGRTMRW). The tract at residues 289-400 (FYDDVTVPSP…QLREVPRAPE (112 aa)) is VCR 1. Phosphoserine is present on residues S329, S425, and S429. The segment at 457–496 (EETPEATEDERDEERGGMEAMESCKGSSNGAQDGEASEKG) is disordered. The segment covering 458–468 (ETPEATEDERD) has biased composition (acidic residues). At T463 the chain carries Phosphothreonine. The interval 506–553 (YLFKCLVNIKKEAGDAVVEMHWVEGQNRDLMNQLCTYVRNQILRLVAS) is VCR 2.

The protein belongs to the methyltransferase superfamily. METTL16/RlmF family. In terms of assembly, interacts with MEPCE. Interacts with LARP7.

It localises to the nucleus. It is found in the cytoplasm. The catalysed reaction is adenosine in U6 snRNA + S-adenosyl-L-methionine = N(6)-methyladenosine in U6 snRNA + S-adenosyl-L-homocysteine + H(+). It carries out the reaction an adenosine in mRNA + S-adenosyl-L-methionine = an N(6)-methyladenosine in mRNA + S-adenosyl-L-homocysteine + H(+). Its activity is regulated as follows. Methyltransferase activity is autoinhibited by the K-loop region that blocks S-adenosyl-L-methionine-binding. Upon activation, K-loop changes conformation, allowing S-adenosyl-L-methionine-binding and subsequent methyltransferase activity. mRNA N6-adenosine-methyltransferase activity is inhibited by zinc. In terms of biological role, RNA N6-methyltransferase that methylates adenosine residues at the N(6) position of a subset of RNAs and is involved in S-adenosyl-L-methionine homeostasis by regulating expression of MAT2A transcripts. Able to N6-methylate a subset of mRNAs and U6 small nuclear RNAs (U6 snRNAs). In contrast to the METTL3-METTL14 heterodimer, only able to methylate a limited number of RNAs: requires both a 5'UACAGAGAA-3' nonamer sequence and a specific RNA structure. Plays a key role in S-adenosyl-L-methionine homeostasis by mediating N6-methylation of MAT2A mRNAs, altering splicing of MAT2A transcripts: in presence of S-adenosyl-L-methionine, binds the 3'-UTR region of MAT2A mRNA and specifically N6-methylates the first hairpin of MAT2A mRNA, preventing recognition of their 3'-splice site by U2AF1/U2AF35, thereby inhibiting splicing and protein production of S-adenosylmethionine synthase. In S-adenosyl-L-methionine-limiting conditions, binds the 3'-UTR region of MAT2A mRNA but stalls due to the lack of a methyl donor, preventing N6-methylation and promoting expression of MAT2A. In addition to mRNAs, also able to mediate N6-methylation of U6 small nuclear RNA (U6 snRNA): specifically N6-methylates adenine in position 43 of U6 snRNAs. Also able to bind various lncRNAs, such as 7SK snRNA (7SK RNA) or 7SL RNA. Specifically binds the 3'-end of the MALAT1 long non-coding RNA. This is RNA N(6)-adenosine-methyltransferase METTL16 from Mus musculus (Mouse).